The sequence spans 207 residues: Small ribosomal subunit protein uS4 (207 aa).

The tract at residues 31–53 is disordered; that stretch reads KAKFDSKPGQHGRTSGARTSDFG. The S4 RNA-binding domain maps to 97–157; sequence SRLDNVVYRM…EKSKKQARIV (61 aa).

Belongs to the universal ribosomal protein uS4 family. Part of the 30S ribosomal subunit. Contacts protein S5. The interaction surface between S4 and S5 is involved in control of translational fidelity.

One of the primary rRNA binding proteins, it binds directly to 16S rRNA where it nucleates assembly of the body of the 30S subunit. In terms of biological role, with S5 and S12 plays an important role in translational accuracy. This Paracidovorax citrulli (strain AAC00-1) (Acidovorax citrulli) protein is Small ribosomal subunit protein uS4.